A 392-amino-acid chain; its full sequence is Pyoverdine export membrane fusion protein PvdR (392 aa).

Residues 1 to 36 (MRRSTHTRRRLLLGGLGLLGLGSLLAWTSLPFGAQP) constitute a signal peptide (tat-type signal). Positions 109 to 181 (IDNLKAQLAE…NASLRSDEAE (73 aa)) form a coiled coil. The segment at 267 to 286 (PPKPLDQTSQGGGSPASATA) is disordered.

This sequence belongs to the membrane fusion protein (MFP) (TC 8.A.1) family. Part of the tripartite efflux system PvdRT-OpmQ, which is composed of an inner membrane component with both ATPase and permease domains, PvdT, a periplasmic membrane fusion protein, PvdR, and an outer membrane component, OpmQ. Post-translationally, predicted to be exported by the Tat system. The position of the signal peptide cleavage has not been experimentally proven.

It is found in the periplasm. In terms of biological role, part of the tripartite efflux system PvdRT-OpmQ required for the secretion into the extracellular milieu of the siderophore pyoverdine (PVD), which is involved in iron acquisition. This subunit is an adapter protein that stimulates the ATPase activity of PvdT and connects the inner and outer membrane components. The system is responsible for export of newly synthesized PVD after the final steps of biosynthesis have taken place in the periplasm. It is also responsible for recycling of PVD after internalization of ferri-PVD into the periplasm by the outer-membrane receptor FpvA and release of iron from PVD, thus making PVD available for new cycles of iron uptake. Contributes to resistance against ampicillin. The protein is Pyoverdine export membrane fusion protein PvdR of Pseudomonas putida (strain ATCC 47054 / DSM 6125 / CFBP 8728 / NCIMB 11950 / KT2440).